Reading from the N-terminus, the 322-residue chain is uncharacterized protein (322 aa).

The signal sequence occupies residues 1–32 (MRDGIGKRAASALFLCGVLVMLAVSSAIVSSA).

This is an uncharacterized protein from Bacillus subtilis (strain 168).